The sequence spans 124 residues: Fluoride-specific ion channel FluC 1 (124 aa).

Transmembrane regions (helical) follow at residues methionine 1 to aspartate 21, alanine 30 to leucine 50, alanine 56 to threonine 76, and isoleucine 102 to leucine 122. Na(+) contacts are provided by glycine 73 and threonine 76.

This sequence belongs to the fluoride channel Fluc/FEX (TC 1.A.43) family.

It is found in the cell membrane. The enzyme catalyses fluoride(in) = fluoride(out). Its activity is regulated as follows. Na(+) is not transported, but it plays an essential structural role and its presence is essential for fluoride channel function. Fluoride-specific ion channel. Important for reducing fluoride concentration in the cell, thus reducing its toxicity. The chain is Fluoride-specific ion channel FluC 1 from Streptomyces avermitilis (strain ATCC 31267 / DSM 46492 / JCM 5070 / NBRC 14893 / NCIMB 12804 / NRRL 8165 / MA-4680).